We begin with the raw amino-acid sequence, 429 residues long: Phosphoribosylamine--glycine ligase (429 aa).

Residues 109-316 form the ATP-grasp domain; it reads KDFLARHQIP…LVDLCLAAID (208 aa). An ATP-binding site is contributed by 135-196; it reads VREQGAPIVV…EEFLDGEEAS (62 aa). Residues 212–235 form a disordered region; that stretch reads SQDHKRVGDKDTGPNTGGMGAYSP. Positions 213-223 are enriched in basic and acidic residues; that stretch reads QDHKRVGDKDT. Residues Glu-286 and Asn-288 each contribute to the Mg(2+) site.

Belongs to the GARS family. The cofactor is Mg(2+). Mn(2+) serves as cofactor.

It catalyses the reaction 5-phospho-beta-D-ribosylamine + glycine + ATP = N(1)-(5-phospho-beta-D-ribosyl)glycinamide + ADP + phosphate + H(+). It participates in purine metabolism; IMP biosynthesis via de novo pathway; N(1)-(5-phospho-D-ribosyl)glycinamide from 5-phospho-alpha-D-ribose 1-diphosphate: step 2/2. The protein is Phosphoribosylamine--glycine ligase of Vibrio parahaemolyticus serotype O3:K6 (strain RIMD 2210633).